The sequence spans 122 residues: Small ribosomal subunit protein bS6 (122 aa).

The protein belongs to the bacterial ribosomal protein bS6 family.

In terms of biological role, binds together with bS18 to 16S ribosomal RNA. This is Small ribosomal subunit protein bS6 from Trichlorobacter lovleyi (strain ATCC BAA-1151 / DSM 17278 / SZ) (Geobacter lovleyi).